We begin with the raw amino-acid sequence, 411 residues long: 4-coumarate--CoA ligase (411 aa).

The protein belongs to the ATP-dependent AMP-binding enzyme family.

The enzyme catalyses (E)-4-coumarate + ATP + CoA = (E)-4-coumaroyl-CoA + AMP + diphosphate. In terms of biological role, converts p-coumaric acid into p-coumaryl CoA. This is necessary for the activation of the photoactive yellow protein (PYP) chromophore. The polypeptide is 4-coumarate--CoA ligase (pcl) (Cereibacter sphaeroides (strain ATCC 17023 / DSM 158 / JCM 6121 / CCUG 31486 / LMG 2827 / NBRC 12203 / NCIMB 8253 / ATH 2.4.1.) (Rhodobacter sphaeroides)).